The primary structure comprises 51 residues: Large ribosomal subunit protein eL39 (51 aa).

The disordered stretch occupies residues 1–22 (MPSQKSFRTKQKLAKAQKQNRP).

The protein belongs to the eukaryotic ribosomal protein eL39 family. Interacts with YIH1.

The sequence is that of Large ribosomal subunit protein eL39 (RPL39) from Debaryomyces hansenii (strain ATCC 36239 / CBS 767 / BCRC 21394 / JCM 1990 / NBRC 0083 / IGC 2968) (Yeast).